Here is a 197-residue protein sequence, read N- to C-terminus: RILP-like protein 2 (197 aa).

A disordered region spans residues 1 to 24 (MEDHPVREEEDGEEDEGALAKSPL). Positions 8–17 (EEEDGEEDEG) are enriched in acidic residues. One can recognise an RH1 domain in the interval 14-96 (EDEGALAKSP…KQEVEGLRKA (83 aa)). Residues 69 to 153 (VNEGSLAVEE…VQEELQCYRS (85 aa)) adopt a coiled-coil conformation. Positions 119–184 (RPRFTLQELR…GNGEKEERTI (66 aa)) constitute an RH2 domain.

This sequence belongs to the RILPL family. As to quaternary structure, homodimer. Interacts with RAC1. Interacts (via N-terminus) with MYO5A, the interaction is required for its role in dendrite formation. Interacts with RAB8A; interaction is dependent on the phosphorylation of RAB8A on 'Thr-72'. Interacts with RAB10 and RAB12; interaction is dependent on the phosphorylation of 'Thr-73' on RAB10 and 'Ser-105' on RAB12.

The protein resides in the cytoplasm. It localises to the cytosol. Its subcellular location is the cytoskeleton. It is found in the microtubule organizing center. The protein localises to the centrosome. The protein resides in the cell projection. It localises to the cilium. Involved in cell shape and neuronal morphogenesis, positively regulating the establishment and maintenance of dendritic spines. Plays a role in cellular protein transport, including protein transport away from primary cilia. May function via activation of RAC1 and PAK1. This Mus musculus (Mouse) protein is RILP-like protein 2 (Rilpl2).